We begin with the raw amino-acid sequence, 323 residues long: SPbeta prophage-derived uncharacterized protein YorG (323 aa).

Residues 222 to 272 adopt a coiled-coil conformation; sequence TAENLEKAIIEAVERQEQAEGIVAVTYEEQKQNNASEELDFNSLMDQIKEI.

In Bacillus subtilis (strain 168), this protein is SPbeta prophage-derived uncharacterized protein YorG (yorG).